Reading from the N-terminus, the 605-residue chain is Elongation factor 4 (605 aa).

The 183-residue stretch at 11 to 193 folds into the tr-type G domain; it reads KRIRNFSIIA…KVVSNIPSPR (183 aa). Residues 23–28 and 140–143 each bind GTP; these read DHGKST and NKID.

Belongs to the TRAFAC class translation factor GTPase superfamily. Classic translation factor GTPase family. LepA subfamily.

The protein localises to the cell membrane. It catalyses the reaction GTP + H2O = GDP + phosphate + H(+). Its function is as follows. Required for accurate and efficient protein synthesis under certain stress conditions. May act as a fidelity factor of the translation reaction, by catalyzing a one-codon backward translocation of tRNAs on improperly translocated ribosomes. Back-translocation proceeds from a post-translocation (POST) complex to a pre-translocation (PRE) complex, thus giving elongation factor G a second chance to translocate the tRNAs correctly. Binds to ribosomes in a GTP-dependent manner. The protein is Elongation factor 4 of Phytoplasma mali (strain AT).